An 842-amino-acid chain; its full sequence is MKTSSFIIVILLCFRIENVIAHTFSFDASLLNHGSGGIDLTLLEKGGQLPGIYPVDIILNGSRIDSRDIFFYTKKNRHGEYYLKPCLTRDILINYGVKTEEYPNLFRQNSEKNRDSSDCADLSVIPQATEDYHFIKQQLILGIPQVAIRPPLTGIAHETMWDDGISAFLLNWQVEGSHWEYRSNTRNSSDNFWASLEPGINLGSWRIRNLTTWNKSSGQSGKWESSYIRVERGLNNIKSRLTFGDDYTPSDIFDSVPFRGGMLGSDENMVPYNQREFAPVVRGIARTQARIEVRQNGYLIQSRIVSPGAFALTDLPVTGNGGDLQVWVLESDGTIQTFNVPFTTPAIALREGYLKYNVTVGEYRPSDDSIEGAYLGQLTAMYGLPWSLTAFGGIQVSEHYQGNALGLGLSLGGFGSISLDTIYSRGQQKGYSNEIGKTWRVRYDKSFELTGTSFAAGYQDSSAGYHSLADVLDTYRNGTAYRSYDNRIRRTTINISQALGEWGSVALNGGRDEYRDKVKQDYIGASYSNSWKGITFAVNWSRNNNIGDYYSNSLRTENNLNLWMSIPMKRWLGGDDKGVTATAQIQRITGQNTLYETGLNGRAFGQKLYWDIREQIVPGSKYDADTSLLNLRWSGGYGELTGMYSYNRNTRQMNVGTSGSMAIHSGGIAFGQKTDDTMALIAAPGIAGASVGGWPGVSTDFRGYTLVGHVSPYQENIITLDPTTFPDNTEVSQTDRRVIPTKGALVQAEFKTRVGNRALVTLTRKDGTLLPFGTVVTLERKTGEAFESAGVVDDKGKVYLSGLSEAGKLKAQWGTNSQCYADYKLPLKKGMSGIFLTRAVCM.

An N-terminal signal peptide occupies residues M1 to A21. C819 and C841 are oxidised to a cystine.

The protein belongs to the fimbrial export usher family.

It is found in the cell outer membrane. Involved in the export and assembly of the AAF/I fimbriae subunits across the outer membrane. The sequence is that of Outer membrane usher protein AggC (aggC) from Escherichia coli.